The primary structure comprises 241 residues: Endodeoxyribonuclease NucC (241 aa).

Residues aspartate 73, glutamate 104, and lysine 106 contribute to the active site. Positions 73 and 104 each coordinate Mg(2+).

It belongs to the NucC endonuclease family. As to quaternary structure, self-oligomerizes. Forms homotrimers; in the presence of cAAA the trimers associate face-to-face to form homohexamers. The 2 cAAA-binding sites are on the exterior of the hexamer at the three-way junction, there are maximally 2 cyclic nucleotides per hexamer. Mg(2+) serves as cofactor.

Activated by cAAA and to a lesser extent cAA and cAAG; cAAA and cAA are products of its cognate CD-NTase. Cyclic nucleotide binding causes hexamerization. Cyclic nucleotide binding causes a series of shifts that enclose the cAAA molecule, enable hexamer formation and juxtapose pairs of active sites to allow dsDNA cleavage. Effector DNase of a CBASS antivirus system. CBASS (cyclic oligonucleotide-based antiphage signaling system) provides immunity against bacteriophage. The CD-NTase protein synthesizes cyclic nucleotides in response to infection; these serve as specific second messenger signals. The signals activate a diverse range of effectors, leading to bacterial cell death and thus abortive phage infection. A type III-C(AAA) CBASS system. Its function is as follows. A cyclic nucleotide-activated dsDNase. In the presence of 3',3',3'-cyclic AMP-AMP-AMP (cAAA), and to a lesser extent 3',3',3'-cyclic AMP-AMP-GMP (cAAG) and cyclic-di-AMP (c-di-AMP), endonucleolytically degrades dsDNA. Binds one cAAA in a pocket on one surface of the trimer; cAAA binding promotes hexamerization, which is necessary for nuclease activation. Also binds c-diAMP or linear di-AMP with lower affinity. The nuclease digests dsDNA to about 50 bp lengths with a 2-base 3' overhang and a consensus recognition site of 5'-Axx|T-3'. DNA has been modeled to contact a pair of juxtaposed active sites (one from each layer of the hexamer), accounting for cleavage on both strands and the 2-base overhang. In terms of biological role, protects E.coli strain JP313 against bacteriophage lambda cI- infection. When the cdnC-cap7-cap6-nucC operon is transformed into a susceptible strain it confers bacteriophage immunity. Mutations in the sensor (Cap7 also called HORMA) or effector proteins (CdnC, NucC) but not the disassembly protein (Cap6 also called Trip13) no longer confer immunity. The presence of the intact operon leads to culture collapse and cell death which occurs before the phage has finished its replication cycle, thus protecting non-infected bacteria by aborting the phage infection and preventing its propagation. The protein is Endodeoxyribonuclease NucC of Escherichia coli (strain MS 115-1).